The sequence spans 468 residues: Membrane-associated tyrosine- and threonine-specific cdc2-inhibitory kinase wee-1.1 (468 aa).

Residues 25-42 (SKDEPNKLNTSRKLEVTT) are compositionally biased toward basic and acidic residues. Positions 25 to 63 (SKDEPNKLNTSRKLEVTTKKNQSNNKKRPPPINKARKSL) are disordered. Positions 49 to 61 (NKKRPPPINKARK) are enriched in basic residues. In terms of domain architecture, Protein kinase spans 106–357 (FNFDKNLGKG…SELMKNHVVK (252 aa)). ATP contacts are provided by residues 112–120 (LGKGSFGEV) and Lys135. Asp224 functions as the Proton acceptor in the catalytic mechanism. Residues Asn229 and Asp242 each coordinate Mg(2+). The interval 425-453 (EDEYEVFSPPRTPVKKSRYQQTMPEVSPP) is disordered.

Belongs to the protein kinase superfamily. Ser/Thr protein kinase family. WEE1 subfamily. In terms of tissue distribution, in the 12-13-cell embryo, expressed in the E blastomere. In the 16-cell embryo, expressed in the eight AB cells.

The protein localises to the nucleus. It catalyses the reaction L-seryl-[protein] + ATP = O-phospho-L-seryl-[protein] + ADP + H(+). The catalysed reaction is L-threonyl-[protein] + ATP = O-phospho-L-threonyl-[protein] + ADP + H(+). Its function is as follows. Acts as a negative regulator of entry into mitosis (G2 to M transition) by phosphorylation of the CDK1 kinase. In Caenorhabditis elegans, this protein is Membrane-associated tyrosine- and threonine-specific cdc2-inhibitory kinase wee-1.1 (wee-1.1).